Reading from the N-terminus, the 199-residue chain is Recombination protein RecR (199 aa).

Residues 57–72 (CSVCGNITEQDPCAIC) form a C4-type zinc finger. The Toprim domain occupies 80-176 (STIMVVEEAK…KVTRLAAGLA (97 aa)).

Belongs to the RecR family.

May play a role in DNA repair. It seems to be involved in an RecBC-independent recombinational process of DNA repair. It may act with RecF and RecO. The protein is Recombination protein RecR of Lactobacillus delbrueckii subsp. bulgaricus (strain ATCC BAA-365 / Lb-18).